Consider the following 72-residue polypeptide: Cytochrome c oxidase subunit 2 (72 aa).

Residues 1-14 are Mitochondrial intermembrane-facing; sequence MAHPSQLGFQDAAS. A helical membrane pass occupies residues 15-45; that stretch reads PVMEELLHFHDHALMIVFLISTLVLYIIVAM. The Mitochondrial matrix portion of the chain corresponds to 46–72; sequence VSTKLTNKHILDSQEVEIVWTILPAVI.

The protein belongs to the cytochrome c oxidase subunit 2 family. As to quaternary structure, component of the cytochrome c oxidase (complex IV, CIV), a multisubunit enzyme composed of 14 subunits. The complex is composed of a catalytic core of 3 subunits MT-CO1, MT-CO2 and MT-CO3, encoded in the mitochondrial DNA, and 11 supernumerary subunits COX4I, COX5A, COX5B, COX6A, COX6B, COX6C, COX7A, COX7B, COX7C, COX8 and NDUFA4, which are encoded in the nuclear genome. The complex exists as a monomer or a dimer and forms supercomplexes (SCs) in the inner mitochondrial membrane with NADH-ubiquinone oxidoreductase (complex I, CI) and ubiquinol-cytochrome c oxidoreductase (cytochrome b-c1 complex, complex III, CIII), resulting in different assemblies (supercomplex SCI(1)III(2)IV(1) and megacomplex MCI(2)III(2)IV(2)). Found in a complex with TMEM177, COA6, COX18, COX20, SCO1 and SCO2. Interacts with TMEM177 in a COX20-dependent manner. Interacts with COX20. Interacts with COX16. Cu cation serves as cofactor.

It localises to the mitochondrion inner membrane. It carries out the reaction 4 Fe(II)-[cytochrome c] + O2 + 8 H(+)(in) = 4 Fe(III)-[cytochrome c] + 2 H2O + 4 H(+)(out). In terms of biological role, component of the cytochrome c oxidase, the last enzyme in the mitochondrial electron transport chain which drives oxidative phosphorylation. The respiratory chain contains 3 multisubunit complexes succinate dehydrogenase (complex II, CII), ubiquinol-cytochrome c oxidoreductase (cytochrome b-c1 complex, complex III, CIII) and cytochrome c oxidase (complex IV, CIV), that cooperate to transfer electrons derived from NADH and succinate to molecular oxygen, creating an electrochemical gradient over the inner membrane that drives transmembrane transport and the ATP synthase. Cytochrome c oxidase is the component of the respiratory chain that catalyzes the reduction of oxygen to water. Electrons originating from reduced cytochrome c in the intermembrane space (IMS) are transferred via the dinuclear copper A center (CU(A)) of subunit 2 and heme A of subunit 1 to the active site in subunit 1, a binuclear center (BNC) formed by heme A3 and copper B (CU(B)). The BNC reduces molecular oxygen to 2 water molecules using 4 electrons from cytochrome c in the IMS and 4 protons from the mitochondrial matrix. This is Cytochrome c oxidase subunit 2 (mt-co2) from Atractosteus spatula (Alligator gar).